A 279-amino-acid polypeptide reads, in one-letter code: Prephenate dehydratase (279 aa).

The Prephenate dehydratase domain occupies Lys2 to Lys178. The region spanning Leu194–Asn270 is the ACT domain.

It carries out the reaction prephenate + H(+) = 3-phenylpyruvate + CO2 + H2O. It participates in amino-acid biosynthesis; L-phenylalanine biosynthesis; phenylpyruvate from prephenate: step 1/1. The sequence is that of Prephenate dehydratase (pheA) from Lactococcus lactis subsp. lactis (strain IL1403) (Streptococcus lactis).